A 464-amino-acid chain; its full sequence is Gasdermin-A3 (464 aa).

Residues 1 to 261 (MPVFEDVTRA…EEPEEEKLIG (261 aa)) form a triggers pyroptosis region. 9–13 (RALVR) is a binding site for a cardiolipin. The next 4 beta stranded transmembrane spans lie at 78–95 (NFSF…LVEV), 99–120 (VKVK…TLSV), 164–180 (VTVE…SLPS), and 184–198 (LGLQ…AVTI). The stretch at 255–327 (EEEKLIGEMH…DKGQKVTLEA (73 aa)) forms a coiled coil.

The protein belongs to the gasdermin family. In terms of assembly, homooligomer; homooligomeric ring-shaped pore complex containing 18-36 subunits when inserted in the membrane. In terms of processing, cleavage relieves autoinhibition by releasing the N-terminal moiety (Gasdermin-A3, N-terminal) that initiates pyroptosis. In contrast to Gsdma, not cleaved by bacterial effector protein SpeB. Palmitoylated. In terms of tissue distribution, highest levels in skin with weak expression in placenta and testis. Not detected in the gastrointestinal tract. In skin, expressed in postnatal hair follicles and epidermis as well as sebaceous gland basal cells.

The protein localises to the cytoplasm. It is found in the cytosol. It localises to the cell membrane. Its subcellular location is the mitochondrion membrane. Its activity is regulated as follows. The full-length protein before cleavage is inactive: intramolecular interactions between N- and C-terminal domains mediate autoinhibition in the absence of activation signal. The intrinsic pyroptosis-inducing activity is carried by the released N-terminal moiety (Gasdermin-A3, N-terminal). Precursor of a pore-forming protein involved in the transition from catagen to telogen at the end of hair follicle morphogenesis. This form constitutes the precursor of the pore: upon cleavage, the released N-terminal moiety (Gasdermin-A3, N-terminal) binds to membranes and forms pores, triggering pyroptosis. This form acts as a sensor of infection: activation is triggered by cleavage by some bacterial effector protein, which releases the N-terminal moiety (Gasdermin-A3, N-terminal). Its function is as follows. Pore-forming protein that causes membrane permeabilization and pyroptosis. Released upon cleavage by some bacterial effector protein, and binds to membrane inner leaflet lipids. Homooligomerizes within the membrane and forms pores of 10-15 nanometers (nm) of inner diameter, allowing the release of mature interleukin-1 (IL1B and IL18) and triggering pyroptosis. Binds to membrane inner leaflet lipids, including bisphosphorylated phosphatidylinositols, such as phosphatidylinositol (4,5)-bisphosphate, as well as phosphatidylinositol (3,4,5)-bisphosphate, and more weakly to monophosphorylated phosphatidylinositols. Also binds to bacterial and mitochondrial lipids, including cardiolipin, and exhibits bactericidal activity. Plays a role in the transition from catagen to telogen at the end of hair follicle morphogenesis, possibly by regulating hair follicle stem cell niche maintenance. Also required for mammary gland development. The sequence is that of Gasdermin-A3 from Mus musculus (Mouse).